Reading from the N-terminus, the 316-residue chain is MDQIEHITINTNGIKMHIASVGTGPVVLLLHGFPELWYSWRHQLLYLSSVGYRAIAPDLRGYGDTDSPASPTSYTALHIVGDLVGALDELGIEKVFLVGHDWGAIIAWYFCLFRPDRIKALVNLSVQFIPRNPAIPFIEGFRTAFGDDFYMCRFQVPGEAEEDFASIDTAQLFKTSLCNRSSAPPCLPKEIGFRAIPPPENLPSWLTEEDINYYAAKFKQTGFTGALNYYRAFDLTWELTAPWTGAQIQVPVKFIVGDSDLTYHFPGAKEYIHNGGFKKDVPLLEEVVVVKDACHFINQERPQEINAHIHDFINKF.

Residues 25–302 form the AB hydrolase-1 domain; it reads PVVLLLHGFP…ACHFINQERP (278 aa). The active-site Nucleophile is Asp-101. Tyr-150 contributes to the an epoxide binding site. Tyr-230 functions as the Proton donor in the catalytic mechanism. His-295 (proton acceptor) is an active-site residue.

The protein belongs to the AB hydrolase superfamily. Epoxide hydrolase family. In terms of assembly, homodimer. In terms of tissue distribution, highly expressed in young fruits 15 days after anthesis (15-DAA).

It carries out the reaction an epoxide + H2O = an ethanediol. The catalysed reaction is (24S)-24,25-epoxycucurbitadienol + H2O = (24R)-24,25-dihydroxycucurbitadienol. The protein operates within secondary metabolite biosynthesis; terpenoid biosynthesis. Its function is as follows. Epoxide hydrolase involved in the biosynthesis of cucurbitacin and mogroside tetracyclic triterpene natural products (e.g. siamenoside I and mogrosides IV, V and VI). Cucurbitacins have cytotoxic properties and exhibit deterrent taste as a defense barrier against herbivores. Mogrosides are nonsugar highly oxygenated compounds used as high-intensity zero-calorie sweeteners; they also possess pharmacological properties such as regulating immunity, lowering blood sugar and lipid levels, protecting the liver, and acting as antioxidants and antitumor agents. Catalyzes the hydrolysis of aromatic epoxide-containing substrates, such as the conversion of 24,25-epoxycucurbitadienol to 24,25-dihydroxycucurbitadienol. This Siraitia grosvenorii (Monk's fruit) protein is Epoxide hydrolase 3.